The sequence spans 414 residues: MLAIEDVRAYEVLDSRGNPTVKAEVTLSDGSVGAAIVPSGASTGSKEALELRDKDERFGGKGVLKAVANVNESIAGEILGLDAFNQTQLDDTLRELDGTKNYSNLGANATLGVSMAAARAAAAALGMPLYRYLGGANASILPVPMCNIINGGAHANNNVDFQEFMITPFGFTSFKEALRSVCEIYAILKKELANSGHSTALGDEGGFAPNLANNTEPIDLLMTCIKKAGYENRVKIALDVASTEFFKDGKYHMEDKAFSSEDLIERYVELCAKYPICSIEDGLAENDFEGWIKLTEKLGNKIQLVGDDLFVTNEDILREGIIKKMANAVLIKPNQIGTITQTMRTVRLAQRNNYKCVMSHRSGESEDAFIADFAVALNTGQIKTGALARGERTAKYNRLLEIELESDEYLGEKL.

Residue Q162 coordinates (2R)-2-phosphoglycerate. The Proton donor role is filled by E204. Mg(2+)-binding residues include D239, E280, and D307. The (2R)-2-phosphoglycerate site is built by K332, R361, S362, and K383. Catalysis depends on K332, which acts as the Proton acceptor.

It belongs to the enolase family. The cofactor is Mg(2+).

Its subcellular location is the cytoplasm. It is found in the secreted. It localises to the cell surface. The catalysed reaction is (2R)-2-phosphoglycerate = phosphoenolpyruvate + H2O. It functions in the pathway carbohydrate degradation; glycolysis; pyruvate from D-glyceraldehyde 3-phosphate: step 4/5. In terms of biological role, catalyzes the reversible conversion of 2-phosphoglycerate (2-PG) into phosphoenolpyruvate (PEP). It is essential for the degradation of carbohydrates via glycolysis. The sequence is that of Enolase from Campylobacter jejuni subsp. doylei (strain ATCC BAA-1458 / RM4099 / 269.97).